Consider the following 184-residue polypeptide: GTP cyclohydrolase 1 (184 aa).

Zn(2+)-binding residues include cysteine 75, histidine 78, and cysteine 146.

Belongs to the GTP cyclohydrolase I family. In terms of assembly, toroid-shaped homodecamer, composed of two pentamers of five dimers.

The catalysed reaction is GTP + H2O = 7,8-dihydroneopterin 3'-triphosphate + formate + H(+). The protein operates within cofactor biosynthesis; 7,8-dihydroneopterin triphosphate biosynthesis; 7,8-dihydroneopterin triphosphate from GTP: step 1/1. In Pseudoalteromonas translucida (strain TAC 125), this protein is GTP cyclohydrolase 1.